A 358-amino-acid chain; its full sequence is Oligopeptide transport ATP-binding protein OppD (358 aa).

The ABC transporter domain occupies 8 to 259; the sequence is LEVKDLAISF…PRHPYTWGLL (252 aa). ATP is bound at residue 44–51; it reads GESGSGKS.

It belongs to the ABC transporter superfamily. The complex is composed of two ATP-binding proteins (OppD and OppF), two transmembrane proteins (OppB and OppC) and a solute-binding protein (OppA).

It is found in the cell membrane. The catalysed reaction is a [peptide](out) + ATP + H2O = a [peptide](in) + ADP + phosphate + H(+). Functionally, part of the ABC transporter complex OppABCDF involved in the uptake of oligopeptides. Probably responsible for energy coupling to the transport system. Required for sporulation and genetic competence. The chain is Oligopeptide transport ATP-binding protein OppD from Bacillus subtilis (strain 168).